Consider the following 183-residue polypeptide: Small ribosomal subunit protein uS4 (183 aa).

The S4 RNA-binding domain occupies 106–168; sequence RRLETLVYKK…ETSPFTDENH (63 aa). The tract at residues 158–183 is disordered; the sequence is NETSPFTDENHPLRMEMSGTKEEENE. The segment covering 165–183 has biased composition (basic and acidic residues); that stretch reads DENHPLRMEMSGTKEEENE.

The protein belongs to the universal ribosomal protein uS4 family. Part of the 30S ribosomal subunit. Contacts protein S5. The interaction surface between S4 and S5 is involved in control of translational fidelity.

Its function is as follows. One of the primary rRNA binding proteins, it binds directly to 16S rRNA where it nucleates assembly of the body of the 30S subunit. With S5 and S12 plays an important role in translational accuracy. The protein is Small ribosomal subunit protein uS4 of Picrophilus torridus (strain ATCC 700027 / DSM 9790 / JCM 10055 / NBRC 100828 / KAW 2/3).